The following is a 205-amino-acid chain: MPAPAFPSIAGLLLAGGRATRMDGVDKGLQLLDGTPLALHVLRRLTPQVDETLISANRHADRYAELSAPFDARIIADETPDFPGPLAGLLAGMRAARAPLVACSPCDTPYLPVDLVARLRAALDAQQADIAMAVTVDAQQVRSPQPTFALLRTSLADDLAARLAAGDRKVRAWYARHKTVEVEFRDERAFYNANSWQELAALARR.

GTP is bound by residues 14 to 16 (LAG), Lys27, Asp77, and Asp107. A Mg(2+)-binding site is contributed by Asp107.

The protein belongs to the MobA family. In terms of assembly, monomer. It depends on Mg(2+) as a cofactor.

Its subcellular location is the cytoplasm. It carries out the reaction Mo-molybdopterin + GTP + H(+) = Mo-molybdopterin guanine dinucleotide + diphosphate. Functionally, transfers a GMP moiety from GTP to Mo-molybdopterin (Mo-MPT) cofactor (Moco or molybdenum cofactor) to form Mo-molybdopterin guanine dinucleotide (Mo-MGD) cofactor. The chain is Molybdenum cofactor guanylyltransferase from Burkholderia cenocepacia (strain HI2424).